The following is a 412-amino-acid chain: Imidazolonepropionase (412 aa).

Fe(3+)-binding residues include His76 and His78. Positions 76 and 78 each coordinate Zn(2+). Positions 85, 148, and 181 each coordinate 4-imidazolone-5-propanoate. Residue Tyr148 participates in N-formimidoyl-L-glutamate binding. His242 lines the Fe(3+) pocket. A Zn(2+)-binding site is contributed by His242. Residue Glu245 coordinates 4-imidazolone-5-propanoate. Asp317 is a Fe(3+) binding site. Zn(2+) is bound at residue Asp317. N-formimidoyl-L-glutamate is bound by residues Asn319 and Gly321. Position 322 (Ser322) interacts with 4-imidazolone-5-propanoate.

The protein belongs to the metallo-dependent hydrolases superfamily. HutI family. The cofactor is Zn(2+). It depends on Fe(3+) as a cofactor.

It localises to the cytoplasm. The enzyme catalyses 4-imidazolone-5-propanoate + H2O = N-formimidoyl-L-glutamate. It functions in the pathway amino-acid degradation; L-histidine degradation into L-glutamate; N-formimidoyl-L-glutamate from L-histidine: step 3/3. Its function is as follows. Catalyzes the hydrolytic cleavage of the carbon-nitrogen bond in imidazolone-5-propanoate to yield N-formimidoyl-L-glutamate. It is the third step in the universal histidine degradation pathway. The polypeptide is Imidazolonepropionase (Staphylococcus aureus (strain MRSA252)).